Here is a 707-residue protein sequence, read N- to C-terminus: Protein kinase C theta type (707 aa).

One can recognise a C2 domain in the interval 1-107 (MSPFLRIGLS…KNNGRTEIWL (107 aa)). Residue tyrosine 90 is modified to Phosphotyrosine; by LCK. The Phorbol-ester/DAG-type 1 zinc finger occupies 159 to 209 (CHEFTATFFPQPTFCSVCHEFVWGLNKQGYQCRQCNAAIHKKCIDKVIAKC). The residue at position 219 (threonine 219) is a Phosphothreonine; by autocatalysis. The Phorbol-ester/DAG-type 2 zinc-finger motif lies at 231–281 (PHRFKVYNYKSPTFCEHCGTLLWGLARQGLKCDACGMNVHHRCQTKVANLC). The disordered stretch occupies residues 327-365 (ETRPPCVPTPGKREPQGISWDSPLDGSNKSAGPPEPEVS). Phosphoserine is present on serine 348. The 255-residue stretch at 380–634 (FILHKMLGKG…RGDIRQHPLF (255 aa)) folds into the Protein kinase domain. ATP contacts are provided by residues 386–394 (LGKGSFGKV) and lysine 409. The active-site Proton acceptor is aspartate 504. Position 538 is a phosphothreonine; by PDPK1 (threonine 538). In terms of domain architecture, AGC-kinase C-terminal spans 635 to 706 (REINWEELER…INPGMETLIC (72 aa)). Serine 676 carries the post-translational modification Phosphoserine; by autocatalysis. At serine 685 the chain carries Phosphoserine. Serine 695 carries the post-translational modification Phosphoserine; by autocatalysis.

This sequence belongs to the protein kinase superfamily. AGC Ser/Thr protein kinase family. PKC subfamily. In terms of assembly, part of a membrane raft complex composed at least of BCL10, CARD11, MALT1 and IKBKB. Interacts with GLRX3 (via N-terminus). Interacts with ECT2. Interacts with CCDC88A/GIV; the interaction leads to phosphorylation of CCDC88A and inhibition of its guanine nucleotide exchange factor activity. Interacts with CD28. The cofactor is Mg(2+). In terms of processing, autophosphorylation at Thr-219 is required for targeting to the TCR and cellular function of PRKCQ upon antigen receptor ligation. Following TCR stimulation, phosphorylated at Tyr-90 and Ser-685. In terms of tissue distribution, T-lymphocytes and skeletal muscle.

Its subcellular location is the cytoplasm. The protein localises to the cell membrane. The enzyme catalyses L-seryl-[protein] + ATP = O-phospho-L-seryl-[protein] + ADP + H(+). It catalyses the reaction L-threonyl-[protein] + ATP = O-phospho-L-threonyl-[protein] + ADP + H(+). With respect to regulation, novel PKCs (PRKCD, PRKCE, PRKCH and PRKCQ) are calcium-insensitive, but activated by diacylglycerol (DAG) and phosphatidylserine. Three specific sites; Thr-538 (activation loop of the kinase domain), Ser-676 (turn motif) and Ser-695 (hydrophobic region), need to be phosphorylated for its full activation. Functionally, calcium-independent, phospholipid- and diacylglycerol (DAG)-dependent serine/threonine-protein kinase that mediates non-redundant functions in T-cell receptor (TCR) signaling, including T-cells activation, proliferation, differentiation and survival, by mediating activation of multiple transcription factors such as NF-kappa-B, JUN, NFATC1 and NFATC2. In TCR-CD3/CD28-co-stimulated T-cells, is required for the activation of NF-kappa-B and JUN, which in turn are essential for IL2 production, and participates in the calcium-dependent NFATC1 and NFATC2 transactivation. Mediates the activation of the canonical NF-kappa-B pathway (NFKB1) by direct phosphorylation of CARD11 on several serine residues, inducing CARD11 association with lipid rafts and recruitment of the BCL10-MALT1 complex, which then activates IKK complex, resulting in nuclear translocation and activation of NFKB1. May also play an indirect role in activation of the non-canonical NF-kappa-B (NFKB2) pathway. In the signaling pathway leading to JUN activation, acts by phosphorylating the mediator STK39/SPAK and may not act through MAP kinases signaling. Plays a critical role in TCR/CD28-induced NFATC1 and NFATC2 transactivation by participating in the regulation of reduced inositol 1,4,5-trisphosphate generation and intracellular calcium mobilization. After costimulation of T-cells through CD28 can phosphorylate CBLB and is required for the ubiquitination and subsequent degradation of CBLB, which is a prerequisite for the activation of TCR. During T-cells differentiation, plays an important role in the development of T-helper 2 (Th2) cells following immune and inflammatory responses, and, in the development of inflammatory autoimmune diseases, is necessary for the activation of IL17-producing Th17 cells. May play a minor role in Th1 response. Upon TCR stimulation, mediates T-cell protective survival signal by phosphorylating BAD, thus protecting T-cells from BAD-induced apoptosis, and by up-regulating BCL-X(L)/BCL2L1 levels through NF-kappa-B and JUN pathways. In platelets, regulates signal transduction downstream of the ITGA2B, CD36/GP4, F2R/PAR1 and F2RL3/PAR4 receptors, playing a positive role in 'outside-in' signaling and granule secretion signal transduction. May relay signals from the activated ITGA2B receptor by regulating the uncoupling of WASP and WIPF1, thereby permitting the regulation of actin filament nucleation and branching activity of the Arp2/3 complex. May mediate inhibitory effects of free fatty acids on insulin signaling by phosphorylating IRS1, which in turn blocks IRS1 tyrosine phosphorylation and downstream activation of the PI3K/AKT pathway. Phosphorylates MSN (moesin) in the presence of phosphatidylglycerol or phosphatidylinositol. Phosphorylates PDPK1 at 'Ser-504' and 'Ser-532' and negatively regulates its ability to phosphorylate PKB/AKT1. Phosphorylates CCDC88A/GIV and inhibits its guanine nucleotide exchange factor activity. Phosphorylates and activates LRRK1, which phosphorylates RAB proteins involved in intracellular trafficking. In Mus musculus (Mouse), this protein is Protein kinase C theta type (Prkcq).